Here is a 343-residue protein sequence, read N- to C-terminus: Galactoside alpha-(1,2)-fucosyltransferase 2 (343 aa).

The Cytoplasmic portion of the chain corresponds to 1–14 (MLVVQMPFSFPMAH). A helical; Signal-anchor for type II membrane protein transmembrane segment spans residues 15–28 (FILFVFTVSTIFHV). Topologically, residues 29–343 (QQRLAKIQAM…AADLSPLLKH (315 aa)) are lumenal. Residues N188, N282, and N308 are each glycosylated (N-linked (GlcNAc...) asparagine).

The protein belongs to the glycosyltransferase 11 family.

Its subcellular location is the golgi apparatus. The protein localises to the golgi stack membrane. The catalysed reaction is a beta-D-galactosyl-(1-&gt;3)-N-acetyl-beta-D-glucosaminyl derivative + GDP-beta-L-fucose = an alpha-L-Fuc-(1-&gt;2)-beta-D-Gal-(1-&gt;3)-beta-D-GlcNAc derivative + GDP + H(+). It catalyses the reaction a beta-D-galactosyl-(1-&gt;4)-N-acetyl-beta-D-glucosaminyl derivative + GDP-beta-L-fucose = an alpha-L-Fuc-(1-&gt;2)-beta-D-Gal-(1-&gt;4)-beta-D-GlcNAc derivative + GDP + H(+). It carries out the reaction a neolactoside nLc4Cer + GDP-beta-L-fucose = a neolactoside IV(2)-alpha-Fuc-nLc4Cer + GDP + H(+). The enzyme catalyses a neolactoside nLc4Cer(d18:1(4E)) + GDP-beta-L-fucose = a neolactoside IV(2)-alpha-Fuc-nLc4Cer(d18:1(4E)) + GDP + H(+). The catalysed reaction is a ganglioside GM1 + GDP-beta-L-fucose = a ganglioside Fuc-GM1 + GDP + H(+). It catalyses the reaction a ganglioside GA1 + GDP-beta-L-fucose = a ganglioside Fuc-GA1 + GDP + H(+). It carries out the reaction Lc4Cer + GDP-beta-L-fucose = alpha-L-fucosyl-(1-&gt;2)-beta-D-galactosyl-(1-&gt;3)-N-acetyl-beta-D-glucosaminyl-(1-&gt;3)-beta-D-galactosyl-(1-&gt;4)-beta-D-glucosyl-(1&lt;-&gt;1')-ceramide + GDP + H(+). The enzyme catalyses a beta-D-Gal-(1-&gt;3)-beta-D-GlcNAc-(1-&gt;3)-beta-D-Gal-(1-&gt;4)-beta-D-Glc-(1&lt;-&gt;1')-Cer(d18:1(4E)) + GDP-beta-L-fucose = alpha-L-fucosyl-(1-&gt;2)- beta-D-galactosyl-(1-&gt;3)-N-acetyl-beta-D-glucosaminyl-(1-&gt;3)-beta-D-galactosyl-(1-&gt;4)-beta-D-glucosyl-(1&lt;-&gt;1')-N-acylsphing-4-enine + GDP + H(+). The catalysed reaction is a ganglioside GD1b + GDP-beta-L-fucose = a ganglioside Fuc-GD1b + GDP + H(+). It catalyses the reaction a ganglioside GM1 (d18:1(4E)) + GDP-beta-L-fucose = a ganglioside Fuc-GM1 (d18:1(4E)) + GDP + H(+). It carries out the reaction a globoside GalGb4Cer (d18:1(4E)) + GDP-beta-L-fucose = a globoside Globo-H (d18:1(4E)) + GDP + H(+). The enzyme catalyses a lactoside III(4)-a-Fuc-Lc4Cer + GDP-beta-L-fucose = a lactoside IV(2),III(4)-a-[Fuc]2-Lc4Cer + GDP + H(+). The catalysed reaction is beta-D-galactosyl-(1-&gt;3)-N-acetyl-D-galactosamine + GDP-beta-L-fucose = alpha-L-fucosyl-(1-&gt;2)-beta-D-galactosyl-(1-&gt;3)-N-acetyl-D-galactosamine + GDP + H(+). It participates in protein modification; protein glycosylation. Catalyzes the transfer of L-fucose, from a guanosine diphosphate-beta-L-fucose, to the terminal galactose on both O- and N-linked glycans chains of cell surface glycoproteins and glycolipids and the resulting epitope regulates several processes such as cell-cell interaction including host-microbe interaction, cell surface expression and cell proliferation. Preferentially fucosylates gangliosides GA1 and GM1 in the antrum, cecum and colon and in the female reproductive organs. Fucosylated host glycoproteins or glycolipids mediate interaction with intestinal microbiota influencing its composition. Creates a soluble precursor oligosaccharide FuC-alpha ((1,2)Galbeta-) called the H antigen which is an essential substrate for the final step in the soluble ABO blood group antigen synthesis pathway. The polypeptide is Galactoside alpha-(1,2)-fucosyltransferase 2 (Gorilla gorilla gorilla (Western lowland gorilla)).